Here is a 572-residue protein sequence, read N- to C-terminus: Zyxin (572 aa).

Position 2 is an N-acetylalanine (Ala2). The tract at residues 23–351 is disordered; that stretch reads QKKFGPVVAP…VRSPGAPGPL (329 aa). 2 stretches are compositionally biased toward pro residues: residues 63-78 and 93-108; these read IPPP…PPPL and FPPP…PPAP. 5 positions are modified to phosphoserine: Ser116, Ser142, Ser143, Ser169, and Ser170. Low complexity predominate over residues 143-156; sequence SIDLEIDSLSSLLD. Position 179 is a phosphothreonine (Thr179). Low complexity predominate over residues 202-239; it reads SPSSSQPLPQVPAPAQSQTQFHVQPQPQPKPQVQLHVQ. The segment covering 240–252 has biased composition (polar residues); that stretch reads SQTQPVSLANTQP. Arg253 carries the post-translational modification Asymmetric dimethylarginine. The span at 253–265 shows a compositional bias: pro residues; the sequence is RGPPASSPAPAPK. The residue at position 259 (Ser259) is a Phosphoserine. The residue at position 265 (Lys265) is an N6-acetyllysine. Residue Ser267 is modified to Phosphoserine. Position 270 is a phosphothreonine (Thr270). An N6-acetyllysine modification is found at Lys272. Thr274 carries the post-translational modification Phosphothreonine. Lys279 is subject to N6-acetyllysine. Phosphoserine occurs at positions 281, 288, and 308. A compositionally biased stretch (polar residues) spans 305-318; sequence GTGSPQPPSFTYAQ. A compositionally biased stretch (basic and acidic residues) spans 319–330; that stretch reads QREKPRVQEKQH. A Phosphoserine modification is found at Ser344. LIM zinc-binding domains lie at 384–443, 444–503, and 504–570; these read CGRC…TLEK, CNTC…YAPR, and CSVC…TARA.

This sequence belongs to the zyxin/ajuba family. Interacts with HPV type 6 protein E6. Does not interact significantly with E6 proteins from HPV types 11, 16, or 18. Interacts, via the Pro-rich regions, with the EVH1 domains of ENAH, EVL and VASP. Interacts with the first LIM domain of TES. Interacts with NEBL (isoform 2). Interacts with SYNPO2. As to quaternary structure, (Microbial infection) Interacts with human papillomavirus type 6/HPV6 protein E6. Does not interact significantly with E6 proteins from HPV types 11, 16, or 18.

Its subcellular location is the cytoplasm. It is found in the cytoskeleton. The protein resides in the nucleus. The protein localises to the cell junction. It localises to the focal adhesion. Its function is as follows. Adhesion plaque protein. Binds alpha-actinin and the CRP protein. Important for targeting TES and ENA/VASP family members to focal adhesions and for the formation of actin-rich structures. May be a component of a signal transduction pathway that mediates adhesion-stimulated changes in gene expression. The protein is Zyxin (ZYX) of Homo sapiens (Human).